The following is a 498-amino-acid chain: Fascin-3 (498 aa).

Belongs to the fascin family. As to expression, expressed in testis.

The protein resides in the cytoplasm. The protein localises to the cytoskeleton. Functionally, acts as an actin bundling protein. The polypeptide is Fascin-3 (Fscn3) (Mus musculus (Mouse)).